A 389-amino-acid polypeptide reads, in one-letter code: Leucine aminopeptidase 1 (389 aa).

The first 19 residues, methionine 1–alanine 19, serve as a signal peptide directing secretion. Positions alanine 20–valine 88 are excised as a propeptide. 5 N-linked (GlcNAc...) asparagine glycosylation sites follow: asparagine 96, asparagine 119, asparagine 149, asparagine 164, and asparagine 181. Zn(2+) contacts are provided by histidine 189 and aspartate 208. Residue asparagine 233 is glycosylated (N-linked (GlcNAc...) asparagine). Residues glutamate 247 and aspartate 274 each contribute to the Zn(2+) site. A disulfide bridge connects residues cysteine 323 and cysteine 327. Histidine 356 serves as a coordination point for Zn(2+).

This sequence belongs to the peptidase M28 family. M28E subfamily. As to quaternary structure, monomer. The cofactor is Zn(2+).

The protein localises to the secreted. Its function is as follows. Extracellular aminopeptidase that allows assimilation of proteinaceous substrates. The polypeptide is Leucine aminopeptidase 1 (LAP1) (Paracoccidioides brasiliensis (strain Pb18)).